The primary structure comprises 339 residues: DNA-directed RNA polymerase subunit alpha (339 aa).

Residues 1–233 (MVREKVRIST…DLFIPFLHAE (233 aa)) are alpha N-terminal domain (alpha-NTD). The interval 267-339 (IALKSIFIDQ…FTINLPKNKF (73 aa)) is alpha C-terminal domain (alpha-CTD).

It belongs to the RNA polymerase alpha chain family. In terms of assembly, in plastids the minimal PEP RNA polymerase catalytic core is composed of four subunits: alpha, beta, beta', and beta''. When a (nuclear-encoded) sigma factor is associated with the core the holoenzyme is formed, which can initiate transcription.

Its subcellular location is the plastid. It localises to the chloroplast. The enzyme catalyses RNA(n) + a ribonucleoside 5'-triphosphate = RNA(n+1) + diphosphate. DNA-dependent RNA polymerase catalyzes the transcription of DNA into RNA using the four ribonucleoside triphosphates as substrates. The sequence is that of DNA-directed RNA polymerase subunit alpha from Populus alba (White poplar).